Here is an 81-residue protein sequence, read N- to C-terminus: Large ribosomal subunit protein uL24 (81 aa).

Belongs to the universal ribosomal protein uL24 family. As to quaternary structure, part of the 50S ribosomal subunit.

One of two assembly initiator proteins, it binds directly to the 5'-end of the 23S rRNA, where it nucleates assembly of the 50S subunit. Its function is as follows. One of the proteins that surrounds the polypeptide exit tunnel on the outside of the subunit. This Chloroherpeton thalassium (strain ATCC 35110 / GB-78) protein is Large ribosomal subunit protein uL24.